Here is a 485-residue protein sequence, read N- to C-terminus: Glutamyl-tRNA(Gln) amidotransferase subunit A (485 aa).

Catalysis depends on charge relay system residues Lys76 and Ser151. Ser175 acts as the Acyl-ester intermediate in catalysis.

This sequence belongs to the amidase family. GatA subfamily. Heterotrimer of A, B and C subunits.

The catalysed reaction is L-glutamyl-tRNA(Gln) + L-glutamine + ATP + H2O = L-glutaminyl-tRNA(Gln) + L-glutamate + ADP + phosphate + H(+). Functionally, allows the formation of correctly charged Gln-tRNA(Gln) through the transamidation of misacylated Glu-tRNA(Gln) in organisms which lack glutaminyl-tRNA synthetase. The reaction takes place in the presence of glutamine and ATP through an activated gamma-phospho-Glu-tRNA(Gln). This Chlorobium luteolum (strain DSM 273 / BCRC 81028 / 2530) (Pelodictyon luteolum) protein is Glutamyl-tRNA(Gln) amidotransferase subunit A.